Consider the following 903-residue polypeptide: KAT8 regulatory NSL complex subunit 1-like protein (903 aa).

Disordered stretches follow at residues 319–343 (DSDA…DECN), 419–441 (MPKS…PSSP), and 652–676 (TECT…HRSE). Composition is skewed to polar residues over residues 423–441 (PQGT…PSSP) and 652–661 (TECTSSYSPD). A PEHE domain is found at 748–862 (EIITPSWKEV…ESPKGKTIHW (115 aa)).

This Xenopus tropicalis (Western clawed frog) protein is KAT8 regulatory NSL complex subunit 1-like protein (kansl1l).